The primary structure comprises 88 residues: Large ribosomal subunit protein bL27 (88 aa).

The tract at residues 1-25 is disordered; it reads MAHKKAGGSSRNGRDSPGQRRGIKR.

Belongs to the bacterial ribosomal protein bL27 family.

This Lawsonia intracellularis protein is Large ribosomal subunit protein bL27 (rpmA).